A 484-amino-acid polypeptide reads, in one-letter code: Poly(A) RNA polymerase GLD2 (484 aa).

Phosphoserine occurs at positions 62 and 69. The short motif at 76–92 is the Nuclear localization signal element; that stretch reads KRISDEKAFRLDGKRQR. At Ser-95 the chain carries Phosphoserine. The Mg(2+) site is built by Asp-213 and Asp-215. Positions 386 to 440 constitute a PAP-associated domain; sequence SLGDLLLGFLKYYATEFDWNTQMISVREAKAIPRPDDMEWRNKYICVEEPFDGTN.

The protein belongs to the DNA polymerase type-B-like family. GLD2 subfamily. In terms of assembly, interacts with CPEB1, CPEB2, CPSF1 and PABPC1. Interacts with QKI isoform QKI7; promoting recruitment to miRNA miR-122 and miR-122 stabilization. Mg(2+) serves as cofactor. The cofactor is Mn(2+).

The protein localises to the cytoplasm. It is found in the nucleus. It catalyses the reaction RNA(n) + ATP = RNA(n)-3'-adenine ribonucleotide + diphosphate. Functionally, cytoplasmic poly(A) RNA polymerase that adds successive AMP monomers to the 3'-end of specific RNAs, forming a poly(A) tail. In contrast to the canonical nuclear poly(A) RNA polymerase, it only adds poly(A) to selected cytoplasmic mRNAs. Does not play a role in replication-dependent histone mRNA degradation. Adds a single nucleotide to the 3' end of specific miRNAs, monoadenylation stabilizes and prolongs the activity of some but not all miRNAs. This is Poly(A) RNA polymerase GLD2 from Rattus norvegicus (Rat).